Reading from the N-terminus, the 224-residue chain is UPF0441 protein PC1_0312 (224 aa).

Positions 178–224 (PKTALAPKPATTSTITRGGFGETVAKQNSMQRSSASSSSSSSRSMGG) are disordered. Low complexity predominate over residues 209–224 (RSSASSSSSSSRSMGG).

This sequence belongs to the UPF0441 family.

In Pectobacterium carotovorum subsp. carotovorum (strain PC1), this protein is UPF0441 protein PC1_0312.